The primary structure comprises 331 residues: Serpentine receptor class alpha-1 (331 aa).

Transmembrane regions (helical) follow at residues Phe-22–Val-42, Ile-57–Ser-77, Tyr-104–Ile-124, Val-143–Ile-163, Phe-189–Phe-209, Ile-238–Ile-258, and Leu-274–Phe-294.

This sequence belongs to the nematode receptor-like protein sra family.

The protein localises to the membrane. This Caenorhabditis elegans protein is Serpentine receptor class alpha-1 (sra-1).